The chain runs to 1052 residues: Eukaryotic translation initiation factor 3 subunit A (1052 aa).

The 181-residue stretch at Ile325–Phe505 folds into the PCI domain. Coiled coils occupy residues Arg568 to Glu712 and Glu769 to Thr882. Basic and acidic residues-rich tracts occupy residues His570 to Gln600 and Lys793 to Lys874. Disordered stretches follow at residues His570 to Gln606 and Lys793 to Asn1052. Polar residues-rich tracts occupy residues Leu875–Trp887 and Ala895–Val906. Composition is skewed to basic and acidic residues over residues Asp942–Gly952, Asp960–Gly970, Arg979–Ala1013, and Gly1037–Asn1052.

Belongs to the eIF-3 subunit A family. In terms of assembly, component of the eukaryotic translation initiation factor 3 (eIF-3) complex.

The protein resides in the cytoplasm. RNA-binding component of the eukaryotic translation initiation factor 3 (eIF-3) complex, which is involved in protein synthesis of a specialized repertoire of mRNAs and, together with other initiation factors, stimulates binding of mRNA and methionyl-tRNAi to the 40S ribosome. The eIF-3 complex specifically targets and initiates translation of a subset of mRNAs involved in cell proliferation. The protein is Eukaryotic translation initiation factor 3 subunit A of Monosiga brevicollis (Choanoflagellate).